The following is a 419-amino-acid chain: CinA-like protein (419 aa).

The protein belongs to the CinA family.

The polypeptide is CinA-like protein (Leptospira borgpetersenii serovar Hardjo-bovis (strain JB197)).